We begin with the raw amino-acid sequence, 240 residues long: Membrane-spanning 4-domains subfamily A member 7 (240 aa).

Residues 1–47 (MLLQSQTMGVSHSFTPKGITIPQREKPGHMYQNEDYLQNGLPTETTV) lie on the Cytoplasmic side of the membrane. A helical membrane pass occupies residues 48 to 68 (LGTVQILCCLLISSLGAILVF). At 69–83 (APYPSHFNPAISTTL) the chain is on the extracellular side. Residues 84–104 (MSGYPFLGALCFGITGSLSII) traverse the membrane as a helical segment. Topologically, residues 105–121 (SGKQSTKPFDLSSLTSN) are cytoplasmic. The chain crosses the membrane as a helical span at residues 122-142 (AVSSVTAGAGLFLLADSMVAL). Residues 143 to 178 (RTASQHCGSEMDYLSSLPYSEYYYPIYEIKDCLLTS) lie on the Extracellular side of the membrane. The helical transmembrane segment at 179-199 (VSLTGVLVVMLIFTVLELLLA) threads the bilayer. The Cytoplasmic segment spans residues 200–240 (AYSSVFWWKQLYSNNPGSSFSSTQSQDHIQQVKKSSSRSWI). The segment at 218–240 (SFSSTQSQDHIQQVKKSSSRSWI) is disordered.

It belongs to the MS4A family. As to expression, ubiquitous expression in normal tissues. Expression is more elevated in adult liver, lung, spleen, and heart than in their fetal counterparts, and is higher in normal tissues than in the cancerous tissue or cell lines. Low levels of expression were detected in the promonocytic stage, whereas high levels of expression were detected in mature monocytes.

The protein resides in the membrane. May be involved in signal transduction as a component of a multimeric receptor complex. The chain is Membrane-spanning 4-domains subfamily A member 7 (MS4A7) from Homo sapiens (Human).